A 214-amino-acid polypeptide reads, in one-letter code: rRNA N(6)-adenosine-methyltransferase metl-5 (214 aa).

S-adenosyl-L-methionine-binding positions include Gln25, Thr28, Gly55, Cys58, Asp78, and 106–107; that span reads DI.

Belongs to the methyltransferase superfamily. PrmA family. As to quaternary structure, heterodimer; heterodimerizes with TRMT112/C04H5.1.

It carries out the reaction adenosine in rRNA + S-adenosyl-L-methionine = N(6)-methyladenosine in rRNA + S-adenosyl-L-homocysteine + H(+). Its function is as follows. Catalytic subunit of a heterodimer with TRMT112/C04H5.1, which specifically methylates the 6th position of adenine in position 1717 of 18S rRNA. The polypeptide is rRNA N(6)-adenosine-methyltransferase metl-5 (Caenorhabditis elegans).